Here is a 134-residue protein sequence, read N- to C-terminus: Crustacean hyperglycemic hormones isoform B (134 aa).

The first 24 residues, 1 to 24 (MFACRTLCLVVVMVASLGTSGVGG), serve as a signal peptide directing secretion. Position 61 is a pyrrolidone carboxylic acid (Gln-61). Phe-63 is modified (D-phenylalanine; in form CHH-B-II). Cystine bridges form between Cys-67-Cys-103, Cys-83-Cys-99, and Cys-86-Cys-112. A Valine amide modification is found at Val-132.

It belongs to the arthropod CHH/MIH/GIH/VIH hormone family. In terms of processing, stereoinversion of L-Phe (form CHH-B-I) to D-Phe (form CHH-B-II). As to expression, produced by the medulla terminalis X-organ in the eyestalks and transported to the sinus gland where they are stored and released. Present also in the ventral nervous system.

The protein resides in the secreted. Functionally, hormone found in the sinus gland of isopods and decapods which controls the blood sugar level. Has a secretagogue action over the amylase released from the midgut gland. May act as a stress hormone and may be involved in the control of molting and reproduction. The sequence is that of Crustacean hyperglycemic hormones isoform B from Homarus americanus (American lobster).